Here is a 176-residue protein sequence, read N- to C-terminus: Transcription termination/antitermination protein NusG (176 aa).

One can recognise a KOW domain in the interval 125–149 (GEVVRVVEGPFANFTATVEEYDVEH).

The protein belongs to the NusG family.

Participates in transcription elongation, termination and antitermination. This Helicobacter pylori (strain ATCC 700392 / 26695) (Campylobacter pylori) protein is Transcription termination/antitermination protein NusG.